The following is a 157-amino-acid chain: Crossover junction endodeoxyribonuclease RuvC (157 aa).

Residues D7, E67, and D140 contribute to the active site. Mg(2+) is bound by residues D7, E67, and D140.

Belongs to the RuvC family. Homodimer which binds Holliday junction (HJ) DNA. The HJ becomes 2-fold symmetrical on binding to RuvC with unstacked arms; it has a different conformation from HJ DNA in complex with RuvA. In the full resolvosome a probable DNA-RuvA(4)-RuvB(12)-RuvC(2) complex forms which resolves the HJ. It depends on Mg(2+) as a cofactor.

It localises to the cytoplasm. The enzyme catalyses Endonucleolytic cleavage at a junction such as a reciprocal single-stranded crossover between two homologous DNA duplexes (Holliday junction).. Functionally, the RuvA-RuvB-RuvC complex processes Holliday junction (HJ) DNA during genetic recombination and DNA repair. Endonuclease that resolves HJ intermediates. Cleaves cruciform DNA by making single-stranded nicks across the HJ at symmetrical positions within the homologous arms, yielding a 5'-phosphate and a 3'-hydroxyl group; requires a central core of homology in the junction. The consensus cleavage sequence is 5'-(A/T)TT(C/G)-3'. Cleavage occurs on the 3'-side of the TT dinucleotide at the point of strand exchange. HJ branch migration catalyzed by RuvA-RuvB allows RuvC to scan DNA until it finds its consensus sequence, where it cleaves and resolves the cruciform DNA. This chain is Crossover junction endodeoxyribonuclease RuvC, found in Rickettsia africae (strain ESF-5).